Here is a 210-residue protein sequence, read N- to C-terminus: Thymidylate kinase (210 aa).

9-16 (GLEGAGKS) serves as a coordination point for ATP.

The protein belongs to the thymidylate kinase family.

It catalyses the reaction dTMP + ATP = dTDP + ADP. Phosphorylation of dTMP to form dTDP in both de novo and salvage pathways of dTTP synthesis. The sequence is that of Thymidylate kinase from Aliivibrio salmonicida (strain LFI1238) (Vibrio salmonicida (strain LFI1238)).